Here is a 1063-residue protein sequence, read N- to C-terminus: MASTTPITMEDLQKALEAQSRALRAELAAGASQLRRPRPPRQRDSSTSGDDSGRDSGGPRRRRGNRGRGQRKDWSKAPPPPEERQESRSQTPVPKPPRAPPQPPQPPRMQTGRGGTAPRPELGPPTNPFQAAVARGLRPPLHDPDTEAPTEACVTSWLWSEGEGAVFYRVDLHFTNLGTRPLDEDGRWDPALMYNPCGPEPPAHVVRAYNQPAGDVRGIWGKGERTYAEQDFRVGGTRWHRLLRMPVRGLDGDSAPLPPHTTERIETRSARHPWRIRFGAPQVFLAGLLLAAVAVGTARAGLQPRTDIAAPPAPPQAPRAHGKHYGHHHHQLPFLGHDGHHGGTLRVGQHHRNASDVLPGHWLQGSWGCYNLSDWHQGTHVCHTKHMDFWCVEHDRPPPVTPTPLTTAANSTTAATPATTPAPCHAGLNDSCGGFLSGCGPMRLRHGADTRCGRLICGLSTTAQYPPTRFGCTMRWGLPPWELVVLTARPEDGWTCRGVPAHPGTRCPELVSPMGHATCSPASALWLATANALSLDHALAAVVLLVPWVLIFMLCRRACRRRGAAAALTAVVLQGYNPPAYGEEAFTYLCTAPGCATQTPVPVRLAGVRFESKIVDGGCFAPWDLEATGACICEIPTDVSCEGLGAWVPAAPCARIWNGTQRACTFWAVNAYSSGGYAQLASYFNPGGSYYKQYHPTACDVEPAFGHSDAACWGFPTDTVMSVFALASYVQHPDKTVRVKFHTETRTVWQLSVAGVSCNVTTEHPFCNTPHGQLEVQVPPDPGDLVEYIMNYTGNQQSRWGLGSPNCHGPDWASPVCQRHSPDCSRLVGATPERPRLRLVDADDPLLRTAPGPGEVWVTPVIGSQARKCGLHIRAGPYGHATVEMPEWIHAHTTSDPWHPPGPLGLKFKTVRPVALPRALAPPRNVRVTGCYQCGTPALVEGLAPGGGNCHLTVNGEDVGAFPPGKFVTAALLNTPPPYQVSCGGESDRASARVIDPAAQSFTGVVYGTHTTAVSETRQTWAEWAAAHWWQLTLGAICALLLAGLLACCAKCLYHLRGAIAPR.

Positions 23–131 (LRAELAAGAS…LGPPTNPFQA (109 aa)) are disordered. The human C1QBP/SF2P32-binding stretch occupies residues 30–69 (GASQLRRPRPPRQRDSSTSGDDSGRDSGGPRRRRGNRGRG). Ser46 is subject to Phosphoserine; by host. Basic residues predominate over residues 59 to 69 (PRRRRGNRGRG). The segment covering 70 to 87 (QRKDWSKAPPPPEERQES) has biased composition (basic and acidic residues). Pro residues predominate over residues 93–107 (VPKPPRAPPQPPQPP). A disulfide bridge connects residues Cys153 and Cys197. Residues 279–300 (GAPQVFLAGLLLAAVAVGTARA) are functions as E2 signal peptide. Over 301–534 (GLQPRTDIAA…LWLATANALS (234 aa)) the chain is Extracellular. Positions 305-327 (RTDIAAPPAPPQAPRAHGKHYGH) are disordered. Asn353, Asn371, Asn410, and Asn429 each carry an N-linked (GlcNAc...) asparagine; by host glycan. A helical transmembrane segment spans residues 535-555 (LDHALAAVVLLVPWVLIFMLC). The Cytoplasmic segment spans residues 556–582 (RRACRRRGAAAALTAVVLQGYNPPAYG). Positions 562-582 (RGAAAALTAVVLQGYNPPAYG) are functions as E1 signal peptide. Over 583–1028 (EEAFTYLCTA…QTWAEWAAAH (446 aa)) the chain is Extracellular. 8 disulfides stabilise this stretch: Cys590–Cys595, Cys619–Cys824, Cys641–Cys653, Cys699–Cys712, Cys758–Cys767, Cys807–Cys817, Cys931–Cys934, and Cys950–Cys983. Asn658 carries N-linked (GlcNAc...) asparagine; by host glycosylation. 2 residues coordinate Ca(2+): Asn670 and Ala671. Ca(2+)-binding residues include Asp718 and Thr719. N-linked (GlcNAc...) asparagine; by host glycans are attached at residues Asn759 and Asn791. 2 O-linked (GalNAc...) threonine; by host glycosylation sites follow: Thr1011 and Thr1012. The helical transmembrane segment at 1029-1049 (WWQLTLGAICALLLAGLLACC) threads the bilayer. Over 1050-1063 (AKCLYHLRGAIAPR) the chain is Extracellular.

As to quaternary structure, homodimer; further assembles into homooligomer. Interacts with human C1QBP. Interacts (via N-terminus) with protease/methyltransferase p150. Heterodimer with spike glycoprotein E2. In terms of assembly, heterodimer with spike glycoprotein E1. Structural polyprotein: Specific enzymatic cleavages in vivo yield mature proteins. Two signal peptidase-mediated cleavages within the polyprotein produce the structural proteins capsid, E2, and E1. The E2 signal peptide remains attached to the C-terminus of the capsid protein after cleavage by the signal peptidase. Another signal peptide at E2 C-terminus directs E1 to the ER, with a similar mechanism. Post-translationally, contains three N-linked oligosaccharides. In terms of processing, capsid is phosphorylated on Ser-46 by host. This phosphorylation negatively regulates capsid protein RNA-binding activity. Dephosphorylated by human PP1A.

The protein resides in the virion. It localises to the host cytoplasm. Its subcellular location is the host mitochondrion. The protein localises to the virion membrane. It is found in the host Golgi apparatus membrane. Capsid protein interacts with genomic RNA and assembles into icosahedric core particles 65-70 nm in diameter. The resulting nucleocapsid eventually associates with the cytoplasmic domain of E2 at the cell membrane, leading to budding and formation of mature virions from host Golgi membranes. Phosphorylation negatively regulates RNA-binding activity, possibly delaying virion assembly during the viral replication phase. Capsid protein dimerizes and becomes disulfide-linked in the virion. Modulates genomic RNA replication. Modulates subgenomic RNA synthesis by interacting with human C1QBP/SF2P32. Induces both perinuclear clustering of mitochondria and the formation of electron-dense intermitochondrial plaques, both hallmarks of rubella virus infected cells. Induces apoptosis when expressed in transfected cells. Its function is as follows. Responsible for viral attachment to target host cell, by binding to the cell receptor. Its transport to the plasma membrane depends on interaction with E1 protein. The surface glycoproteins display an irregular helical organization and a pseudo-tetrameric inner nucleocapsid arrangement. Functionally, class II viral fusion protein. Fusion activity is inactive as long as E1 is bound to E2 in mature virion. After virus attachment to target cell and clathrin-mediated endocytosis, acidification of the endosome would induce dissociation of E1/E2 heterodimer and concomitant trimerization of the E1 subunits. This E1 homotrimer is fusion active, and promotes release of viral nucleocapsid in cytoplasm after endosome and viral membrane fusion. The cytoplasmic tail of spike glycoprotein E1 modulates virus release. The surface glycoproteins display an irregular helical organization and a pseudo-tetrameric inner nucleocapsid arrangement. The chain is Structural polyprotein from Homo sapiens (Human).